Here is an 840-residue protein sequence, read N- to C-terminus: Protein translocase subunit SecA (840 aa).

ATP contacts are provided by residues Gln-85, 103–107 (GEGKT), and Asp-492. The interval 787–822 (QRERVAKETGASHGGDSQEVKKKPVKKEPKVGRNDL) is disordered. The span at 802–819 (DSQEVKKKPVKKEPKVGR) shows a compositional bias: basic and acidic residues. Residues Cys-823, Cys-825, Cys-834, and Cys-835 each coordinate Zn(2+).

It belongs to the SecA family. As to quaternary structure, monomer and homodimer. Part of the essential Sec protein translocation apparatus which comprises SecA, SecYEG and auxiliary proteins SecDF. Other proteins may also be involved. Zn(2+) is required as a cofactor.

The protein localises to the cell membrane. It is found in the cytoplasm. The enzyme catalyses ATP + H2O + cellular proteinSide 1 = ADP + phosphate + cellular proteinSide 2.. Part of the Sec protein translocase complex. Interacts with the SecYEG preprotein conducting channel. Has a central role in coupling the hydrolysis of ATP to the transfer of proteins into and across the cell membrane, serving as an ATP-driven molecular motor driving the stepwise translocation of polypeptide chains across the membrane. This Clostridium perfringens (strain ATCC 13124 / DSM 756 / JCM 1290 / NCIMB 6125 / NCTC 8237 / Type A) protein is Protein translocase subunit SecA.